We begin with the raw amino-acid sequence, 272 residues long: Elongation factor Ts (272 aa).

Positions 86–89 (TDFV) are involved in Mg(2+) ion dislocation from EF-Tu.

The protein belongs to the EF-Ts family.

The protein localises to the cytoplasm. Its function is as follows. Associates with the EF-Tu.GDP complex and induces the exchange of GDP to GTP. It remains bound to the aminoacyl-tRNA.EF-Tu.GTP complex up to the GTP hydrolysis stage on the ribosome. In Blochmanniella pennsylvanica (strain BPEN), this protein is Elongation factor Ts.